The primary structure comprises 81 residues: U10-myrmicitoxin-Mri1b (81 aa).

The signal sequence occupies residues 1-26; that stretch reads MRLSYISLTLAIIFVMAIVHAPETEA. Positions 27–52 are excised as a propeptide; the sequence is KAYPEADAVAEAIAVGEADAVGVADP. A Valine amide modification is found at Val-80.

It belongs to the formicidae venom precursor-01 superfamily. In terms of tissue distribution, expressed by the venom gland.

The protein resides in the secreted. Its function is as follows. Induces paralysis after injection into blowflies (L.caesar), and then death within 24 hours. May have antimicrobial properties, like most ant linear peptides. The chain is U10-myrmicitoxin-Mri1b from Manica rubida (European giant red ant).